We begin with the raw amino-acid sequence, 214 residues long: Peptide methionine sulfoxide reductase MsrA 2 (214 aa).

The active site involves C45.

Belongs to the MsrA Met sulfoxide reductase family.

It catalyses the reaction L-methionyl-[protein] + [thioredoxin]-disulfide + H2O = L-methionyl-(S)-S-oxide-[protein] + [thioredoxin]-dithiol. It carries out the reaction [thioredoxin]-disulfide + L-methionine + H2O = L-methionine (S)-S-oxide + [thioredoxin]-dithiol. Has an important function as a repair enzyme for proteins that have been inactivated by oxidation. Catalyzes the reversible oxidation-reduction of methionine sulfoxide in proteins to methionine. The sequence is that of Peptide methionine sulfoxide reductase MsrA 2 (msrA2) from Synechocystis sp. (strain ATCC 27184 / PCC 6803 / Kazusa).